The sequence spans 1120 residues: MRLLMSQEIMFKYIFPDLAAIQKESFKSFLLEGLSEVLDSFPIIVDPTGKLELQFFGKDYKLKFPRYSVRKAKSRDKTYSAQIYIPAKLTRRDIEVIKENISTSKDLSYFFNSQDINKKYRKRPVFIGDLPLMTNRGTFVISGTERIIINQIVRSPGVYYKKELDKNNKQIYSCSIISNRGSWLKFEIDSKAQIWAKIDKNHKVSAYIFLRSIGLNNEDIRKRLTKYNYLINSSLTYYKKEFSKDVNNVDIEKITEEEALVIVYSKLRPNEPATLAVAKQMLYTRFFDPKRYDLGAVGRHKINQKLNLKVPTHFRVLSPEDILVSLDYLLNIKEQNIGTFDDIDHLGNRRVRSVGELLQNQVRIGLNRLERIIRERMIICDLDSLSLSNLVNPKPLMASVREFFSSSQLSQFMDQTNPLSELTHKRRISALGPGGLNKDRAGFAVRDLHPSHYGRICPIETPEGPNAGLIGSLSIYAKVNRYGFIETPCYKVTDGQVLKKDKLYYITADQEDYLRIAPADISLDVNDFIQDKIIAVRYKQEFITATISQVDYMAVSPIQFISAATSLIPFLEHDDANRALMGSNMQRQAVPLLFPEKSIVGTGLEAKIAKDSGMTIISRTNGTVSYVSGTKIGIQNKEGYTIHYRLKKYYRSNQDTCINQRPIVWPGENIRIGQTIADGASTDGGEIALGRNIIVAYMPWEGYNYEDAFLISERLVYEDLYTSIHIERYELECRQTKLGSEEITRDIPNVSEASIGLLDKNGIISIGSWVDAGDILVGKVTPKGESDQLPEGKLLRAIFGEKARDVRDTSLRLPNATKGRVVNVKIFKRQKGDELPPGTNEIIRVYVAQKRKIQVGDKMAGRHGNKGIISRILSLQDMPFLPDGTPVDIILNPLGVPSRMNVGQLFECLLGLAGEYSSKRFKIIPFDEMYGSEASRALVYNKLKQASSMNDKSWLFNALHPGKVMLVDGRTGEFFDNPVTVGKAYILKLVHLVDDKIHARSTGPYSLVTQQPLGGRAQHGGQRLGEMEVWALEAFGAAYTLQELLTVKSDDMQGRNDALNAIVKGKPIPKPGTPESFKVLMRELQSLALDIAVHKLELLDNGNKASIEIDLMSDEQVSAI.

It belongs to the RNA polymerase beta chain family. In terms of assembly, in plastids the minimal PEP RNA polymerase catalytic core is composed of four subunits: alpha, beta, beta', and beta''. When a (nuclear-encoded) sigma factor is associated with the core the holoenzyme is formed, which can initiate transcription.

Its subcellular location is the plastid. It localises to the chloroplast. The catalysed reaction is RNA(n) + a ribonucleoside 5'-triphosphate = RNA(n+1) + diphosphate. Its function is as follows. DNA-dependent RNA polymerase catalyzes the transcription of DNA into RNA using the four ribonucleoside triphosphates as substrates. This is DNA-directed RNA polymerase subunit beta from Gracilaria tenuistipitata var. liui (Red alga).